Consider the following 431-residue polypeptide: MGSEQDQRKRWGGCLGVFSCFKSQKGGKRIVPASRIPEGGNVSASQPNGAHQAGVLNNQAAGGINLSLLAPPSSPASFTNSALPSTTQSPNCYLSLAANSPGGPSSSMYATGPYAHETQLVSPPVFSTFTTEPSTAPFTPPPELARLTAPSSPDVPYARFLTSSMDLKNSGKGHYNDLQATYSLYPGSPASALRSPISRASGDGLLSPQNGKCSRSDSGNTFGYDTNGVSTPLQESNFFCPETFAKFYLDHDPSVPQNGGRLSVSKDSDVYPTNGYGNGNQNRQNRSPKQDMEELEAYRASFGFSADEIITTSQYVEITDVMDGSFNTSAYSPSDGQKLLRREANLLSQTSPKSEADLDSQVVDFQSPKSSNSYKDHKQRNRIHADEEALLSRVGSVKGSRSYHISSSDAEVEYRRGRSLRESRENRHRKA.

3 disordered regions span residues 31–55 (VPASRIPEGGNVSASQPNGAHQAGV), 257–291 (QNGGRLSVSKDSDVYPTNGYGNGNQNRQNRSPKQD), and 365–431 (FQSP…HRKA). Residues 42–55 (VSASQPNGAHQAGV) are compositionally biased toward polar residues. Positions 412-425 (VEYRRGRSLRESRE) are enriched in basic and acidic residues.

This is an uncharacterized protein from Arabidopsis thaliana (Mouse-ear cress).